The sequence spans 87 residues: DLLNKPKEIKEKILIGRVEKRLKELSLMDQTFIKDSNLSIEELIKQNISLLGENIKIRRFERFVLGEGLNKRSDDFANEVAQIINAN.

This sequence belongs to the EF-Ts family.

It is found in the plastid. It localises to the chloroplast. Its function is as follows. Associates with the EF-Tu.GDP complex and induces the exchange of GDP to GTP. It remains bound to the aminoacyl-tRNA.EF-Tu.GTP complex up to the GTP hydrolysis stage on the ribosome. This chain is Elongation factor Ts, chloroplastic (tsf), found in Antithamnion sp. (Red alga).